The chain runs to 307 residues: Transcription initiation factor IIF subunit beta (307 aa).

Basic and acidic residues predominate over residues 1 to 12 (MSEEKPTVRTEE). Disordered regions lie at residues 1–22 (MSEE…DAGD) and 261–307 (VELR…IDVV). Positions 13 to 22 (DDRYEDDAGD) are enriched in acidic residues. Residues 263-290 (LRNQQASQSESSSIDHTGKNTSPDNPGT) show a composition bias toward polar residues. A compositionally biased stretch (acidic residues) spans 292 to 307 (AEEDEDDDGVEMIDVV).

It belongs to the TFIIF beta subunit family. Component of the fcp1/TFIIF/polII complex via interaction of tfg3 with both tfg1/TFIIF-alpha and tfg2/TFIIF-beta subunits.

It localises to the nucleus. TFIIF is a general transcription initiation factor that binds to RNA polymerase II and helps to recruit it to the initiation complex in collaboration with TFIIB. It promotes transcription elongation. This Schizosaccharomyces pombe (strain 972 / ATCC 24843) (Fission yeast) protein is Transcription initiation factor IIF subunit beta (tfg2).